Reading from the N-terminus, the 2227-residue chain is Genome polyprotein (2227 aa).

2 consecutive short sequence motifs ((L)YPX(n)L motif) follow at residues 167–171 (YPHGL) and 200–205 (YPVWEL). The involved in P1-2A pentamerization stretch occupies residues 766-836 (MMSRIAAGDL…PRKMKGLFSQ (71 aa)). Residues 1011–1031 (TVEIINTVLCFVKSGILLYVI) traverse the membrane as a helical segment. The interval 1043 to 1070 (IGLLRVMNYADIGCSVISCGKVFSKMLE) is membrane-penetrating ability. The stretch at 1127-1152 (KKKDILNILKDNQQKIEKAIEEADNF) forms a coiled coil. Residues 1204–1366 (HQKLKNLGSI…SFFKNPHNDM (163 aa)) form the SF3 helicase domain. ATP is bound at residue 1230 to 1237 (GKRGGGKS). Residues 1462-1482 (WVAVGAAVGILGVLVGGWFVY) traverse the membrane as a helical segment. Tyr1499 is modified (O-(5'-phospho-RNA)-tyrosine). The Peptidase C3 domain occupies 1514–1728 (DPVESQSTLE…VAKLVTQEMF (215 aa)). Catalysis depends on for protease 3C activity residues His1563, Asp1603, and Cys1691. Residues 1976-2097 (DVGLDLDFSA…VFSRDVQIDN (122 aa)) form the RdRp catalytic domain.

It belongs to the picornaviridae polyprotein family. As to quaternary structure, homodimer. Homomultimer; probably interacts with membranes in a multimeric form. Seems to assemble into amyloid-like fibers. Homodimer. Monomer. Interacts with protein 3CD. In terms of assembly, interacts with host ACBD3. As to quaternary structure, interacts with protein 3AB. Interacts with human MAVS. In terms of assembly, homodimer; disulfide-linked. As to quaternary structure, homopentamer. Homooligomer. Interacts with capsid protein VP2. Interacts with capsid protein VP3. In terms of assembly, interacts with capsid protein VP1. Interacts with capsid protein VP3. As to quaternary structure, interacts with capsid protein VP1. Interacts with capsid protein VP2. Specific enzymatic cleavages by viral protease in vivo yield a variety of precursors and mature proteins. Polyprotein processing intermediates are produced, such as P1-2A which is a functional precursor of the structural proteins, VP0 which is a VP4-VP2 precursor, VP1-2A precursor, 3ABC precursor which is a stable and catalytically active precursor of 3A, 3B and 3C proteins, 3AB and 3CD precursors. The assembly signal 2A is removed from VP1-2A by a host protease, possibly host Cathepsin L. This cleavage occurs over a region of 3 amino-acids probably generating VP1 proteins with heterogeneous C-termini. Post-translationally, during virion maturation, immature virions are rendered infectious following cleavage of VP0 into VP4 and VP2. This maturation seems to be an autocatalytic event triggered by the presence of RNA in the capsid and is followed by a conformational change of the particle. In terms of processing, the assembly signal 2A is removed from VP1-2A by a host protease, possibly host Cathepsin L in naked virions. This cleavage does not occur in enveloped virions. This cleavage occurs over a region of 3 amino-acids probably generating VP1 proteins with heterogeneous C-termini. VPg is uridylylated prior to priming replication into VPg-pUpU. Post-translationally, unlike other picornaviruses, does not seem to be myristoylated.

It is found in the virion. The protein localises to the host endosome. It localises to the host multivesicular body. The protein resides in the host membrane. Its subcellular location is the host mitochondrion outer membrane. It is found in the host cytoplasm. The protein localises to the host cytoplasmic vesicle membrane. It carries out the reaction RNA(n) + a ribonucleoside 5'-triphosphate = RNA(n+1) + diphosphate. It catalyses the reaction a ribonucleoside 5'-triphosphate + H2O = a ribonucleoside 5'-diphosphate + phosphate + H(+). The catalysed reaction is Selective cleavage of Gln-|-Gly bond in the poliovirus polyprotein. In other picornavirus reactions Glu may be substituted for Gln, and Ser or Thr for Gly.. Capsid proteins VP1, VP2, and VP3 form a closed capsid enclosing the viral positive strand RNA genome. All these proteins contain a beta-sheet structure called beta-barrel jelly roll. Together they form an icosahedral capsid (T=3) composed of 60 copies of each VP1, VP2, and VP3, with a diameter of approximately 300 Angstroms. VP1 is situated at the 12 fivefold axes, whereas VP2 and VP3 are located at the quasi-sixfold axes. The naked capsid interacts with the host receptor HAVCR1 to provide virion attachment to and probably entry into the target cell. In terms of biological role, VP0 precursor is a component of the immature procapsids. Its function is as follows. Plays a role in the assembly of the 12 pentamers into an icosahedral structure. Has not been detected in mature virions, supposedly owing to its small size. Functionally, precursor component of immature procapsids that corresponds to an extended form of the structural protein VP1. After maturation, possibly by the host Cathepsin L, the assembly signal 2A is cleaved to give rise to the mature VP1 protein. Functions as a viroporin. Affects membrane integrity and causes an increase in membrane permeability. Involved in host intracellular membrane rearrangements probably to give rise to the viral factories. Does not disrupt calcium homeostasis or glycoprotein trafficking. Antagonizes the innate immune response of the host by suppressing IFN-beta synthesis, which it achieves by interfering with the RIG-I/IFIH1 pathway. In terms of biological role, affects membrane integrity and causes an increase in membrane permeability. Its function is as follows. Associates with and induces structural rearrangements of intracellular membranes. Displays RNA-binding activity. Functionally, the precursor 3ABC is targeted to the mitochondrial membrane where protease 3C activity cleaves and inhibits the host antiviral protein MAVS, thereby disrupting activation of IRF3 through the IFIH1/MDA5 pathway. In vivo, the protease activity of 3ABC precursor is more efficient in cleaving the 2BC precursor than that of protein 3C. The 3ABC precursor may therefore play a role in the proteolytic processing of the polyprotein. Possible viroporin. Interacts with the 3CD precursor and with RNA structures found at both the 5'- and 3'-termini of the viral genome. Since the 3AB precursor contains the hydrophobic domain 3A, it probably anchors the whole viral replicase complex to intracellular membranes on which viral RNA synthesis occurs. In terms of biological role, may serve as membrane anchor to the 3AB and 3ABC precursors via its hydrophobic domain. May interact with RNA. Its function is as follows. Acts as a primer for viral RNA replication and remains covalently bound to viral genomic RNA. VPg is uridylylated prior to priming replication into VPg-pUpU. The VPg-pUpU is then used as primer on the genomic RNA poly(A) by the RNA-dependent RNA polymerase to replicate the viral genome. Functionally, cysteine protease that generates mature viral proteins from the precursor polyprotein. In addition to its proteolytic activity, it binds to viral RNA, and thus influences viral genome replication. RNA and substrate bind cooperatively to the protease. Cleaves IKBKG/NEMO to impair innate immune signaling. Cleaves host PABPC1 which may participate in the switch of viral translation to RNA synthesis. Interacts with the 3AB precursor and with RNA structures found at both the 5'- and 3'-termini of the viral genome. Disrupts TLR3 signaling by degrading the host adapter protein TICAM1/TRIF. In terms of biological role, RNA-directed RNA polymerase 3D-POL replicates genomic and antigenomic RNA by recognizing replications specific signals. The sequence is that of Genome polyprotein from Cercopithecus hamlyni (Owl-faced monkey).